A 368-amino-acid chain; its full sequence is Glutaminyl-peptide cyclotransferase (368 aa).

The first 23 residues, 1–23 (MARERRDSKAATFFCLAWALCLA), serve as a signal peptide directing secretion. N53 and N65 each carry an N-linked (GlcNAc...) asparagine glycan. Residues C143 and C169 are joined by a disulfide bond. Residue D164 participates in Zn(2+) binding. E207 serves as the catalytic Proton acceptor. Residue E208 coordinates Zn(2+). D254 acts as the Proton acceptor in catalysis. N292 is a glycosylation site (N-linked (GlcNAc...) asparagine). Zn(2+) is bound at residue H336. N-linked (GlcNAc...) asparagine glycosylation occurs at N352.

This sequence belongs to the glutaminyl-peptide cyclotransferase family. Expressed by the venom gland.

The protein localises to the secreted. The enzyme catalyses N-terminal L-glutaminyl-[peptide] = N-terminal 5-oxo-L-prolyl-[peptide] + NH4(+). Its function is as follows. Responsible for the biosynthesis of pyroglutamyl peptides. Has a bias against acidic and tryptophan residues adjacent to the N-terminal glutaminyl residue and a lack of importance of chain length after the second residue. Also catalyzes N-terminal pyroglutamate formation. The polypeptide is Glutaminyl-peptide cyclotransferase (QPCT) (Bothrops jararaca (Jararaca)).